Here is a 320-residue protein sequence, read N- to C-terminus: Sucrose operon repressor (320 aa).

In terms of domain architecture, HTH lacI-type spans 1 to 55; it reads MKNIADIAKIAGVSKSTVSRYLNNGSVSLKTQQKLDEIIRENDYQPNQFAQSLRA. Positions 4-23 form a DNA-binding region, H-T-H motif; sequence IADIAKIAGVSKSTVSRYLN.

Functionally, negative regulator of scrB expression. The chain is Sucrose operon repressor (scrR) from Staphylococcus xylosus.